The following is a 255-amino-acid chain: MTQTSSLWVGVISLFPDMFDAITDQGVTGRAVKSGLIDFNCWNPRDYALDKHRTVDDRPYGGGPGMLMMVEPLKKAIAEAKKAAGDGAKVIYMSPQGRKLDQQGASELASSKKLILIAGRYEGIDERIIESYVDEEWSIGDFILSGGELPAMTLIDAVARLVPGVLGHNQSAEQDSFSDGLLDCPHYTRPETLDDKQVPAVLLSGNHQEIAKWRLMQSLGRTWLRRPDLLHNLALTEEQAVLLAKFQQEYQKACG.

Residues Gly119 and 139 to 144 (IGDFIL) contribute to the S-adenosyl-L-methionine site.

It belongs to the RNA methyltransferase TrmD family. As to quaternary structure, homodimer.

It localises to the cytoplasm. The enzyme catalyses guanosine(37) in tRNA + S-adenosyl-L-methionine = N(1)-methylguanosine(37) in tRNA + S-adenosyl-L-homocysteine + H(+). In terms of biological role, specifically methylates guanosine-37 in various tRNAs. This chain is tRNA (guanine-N(1)-)-methyltransferase, found in Pseudoalteromonas translucida (strain TAC 125).